The sequence spans 62 residues: Agnoprotein (62 aa).

Over 1 to 23 the chain is Cytoplasmic; sequence MVLRRLSRQASVKVRRSWTESKK. A helical; Signal-anchor for type II membrane protein membrane pass occupies residues 24 to 40; sequence TAQRLFVFVLELLLQFC. The Extracellular portion of the chain corresponds to 41 to 62; the sequence is EGEDTVDGKRKKPERLTEKPES.

The protein belongs to the polyomaviruses agnoprotein family. As to quaternary structure, homooligomer. Interacts with VP1. Interacts with large T antigen; this interaction may impact upon the activity of T-antigen on the control of viral gene transcription and replication. Interacts with small t antigen. Interacts with host CBX5; this interaction induces the dissociation of CBX5 from LBR, resulting in destabilization of the nuclear envelope. In terms of processing, phosphorylated by host kinase. Phosphorylation segregates agnoprotein in cytoplasm, whereas unphosphorylated agnoprotein migrate to the nucleus.

It localises to the host cytoplasm. It is found in the host nucleus membrane. Its subcellular location is the host rough endoplasmic reticulum membrane. The protein resides in the host cell membrane. Alters the structure of the nuclear envelope by interacting with host CBX5 and disrupting CBX5 association with LBR. Involved in the perinuclear-nuclear localization of the capsid protein VP1 during virion assembly and maturation. Plays an important role in the release of progeny virions from infected cells and in viral propagation, probably by acting as a viral ionic channel in the host plasma membrane. Allows influx of extracellular calcium ions in the host cell. May contribute to viral genome transcription and translation of viral late proteins. The protein is Agnoprotein of Simian virus 40 (SV40).